We begin with the raw amino-acid sequence, 216 residues long: Orotate phosphoribosyltransferase (216 aa).

5-phospho-alpha-D-ribose 1-diphosphate is bound by residues Arg101, Lys105, His107, and 127–135 (EDLISTGGS). Orotate is bound at residue Ser131.

It belongs to the purine/pyrimidine phosphoribosyltransferase family. PyrE subfamily. As to quaternary structure, homodimer. Mg(2+) serves as cofactor.

It carries out the reaction orotidine 5'-phosphate + diphosphate = orotate + 5-phospho-alpha-D-ribose 1-diphosphate. It functions in the pathway pyrimidine metabolism; UMP biosynthesis via de novo pathway; UMP from orotate: step 1/2. In terms of biological role, catalyzes the transfer of a ribosyl phosphate group from 5-phosphoribose 1-diphosphate to orotate, leading to the formation of orotidine monophosphate (OMP). This is Orotate phosphoribosyltransferase from Cutibacterium acnes (strain DSM 16379 / KPA171202) (Propionibacterium acnes).